The following is a 354-amino-acid chain: Protein OVEREXPRESSOR OF CATIONIC PEROXIDASE 3 (354 aa).

The short motif at 63–70 (NRKGFVSS) is the Nuclear localization signal 1 element. Disordered stretches follow at residues 65-98 (KGFVSSSSSSPKKNKKKSLDGADNGGGEEEEDPF) and 151-186 (TGDVDVDVDNDDDDNDDDDNDDDDDDSEEDERPTKL). A compositionally biased stretch (acidic residues) spans 154–181 (VDVDVDNDDDDNDDDDNDDDDDDSEEDE). The Nuclear localization signal 2 signature appears at 191-198 (LKRLAYAL). Residues 243–264 (KPPVAAPENSSPDPSPVESLSA) are disordered. Positions 286–345 (RWSAQKRVKKAHIETLEKVYRRSKRPTNAVVSSIVQVTNLPRKRVLKWFEDKRAEDGVPD) form a DNA-binding region, homeobox. Positions 293-300 (VKKAHIET) match the Nuclear localization signal 3 motif.

The protein localises to the nucleus. May modulate chromatin structure by regulation of nucleosome assembly/disassembly. Homeodomain transcription factor that mediates jasmonic acid (JA)-mediated COI1-dependent and abscisic acid (ABA)-mediated PMR4-dependent resistance to infection by necrotrophic fungal pathogens (e.g. B.cinerea and P.cucumerina) and bacterial pathogens (e.g. P.syringae DC3000); this resistance involves at least callose deposition. Required for the P.fluorescens WCS417r-triggered JA-dependent induced systemic resistance (ISR) against both P.syringae DC3000 and H.arabidopsidis. Negative regulator of the ABA-dependent drought resistance. This chain is Protein OVEREXPRESSOR OF CATIONIC PEROXIDASE 3, found in Arabidopsis thaliana (Mouse-ear cress).